Reading from the N-terminus, the 28-residue chain is Antibacterial protein LC3 (28 aa).

Antibacterial activity against X.campestris, especially strain G, and P.solacearum PO1. This Bacillus subtilis protein is Antibacterial protein LC3.